A 321-amino-acid chain; its full sequence is Methionyl-tRNA formyltransferase (321 aa).

(6S)-5,6,7,8-tetrahydrofolate is bound at residue 113–116 (SILP).

The protein belongs to the Fmt family.

It carries out the reaction L-methionyl-tRNA(fMet) + (6R)-10-formyltetrahydrofolate = N-formyl-L-methionyl-tRNA(fMet) + (6S)-5,6,7,8-tetrahydrofolate + H(+). Functionally, attaches a formyl group to the free amino group of methionyl-tRNA(fMet). The formyl group appears to play a dual role in the initiator identity of N-formylmethionyl-tRNA by promoting its recognition by IF2 and preventing the misappropriation of this tRNA by the elongation apparatus. This chain is Methionyl-tRNA formyltransferase, found in Vibrio atlanticus (strain LGP32) (Vibrio splendidus (strain Mel32)).